Here is a 272-residue protein sequence, read N- to C-terminus: Bifunctional protein FolD (272 aa).

Residues 155 to 157 (GRS), Ser-182, and Ile-223 contribute to the NADP(+) site.

This sequence belongs to the tetrahydrofolate dehydrogenase/cyclohydrolase family. Homodimer.

It carries out the reaction (6R)-5,10-methylene-5,6,7,8-tetrahydrofolate + NADP(+) = (6R)-5,10-methenyltetrahydrofolate + NADPH. The catalysed reaction is (6R)-5,10-methenyltetrahydrofolate + H2O = (6R)-10-formyltetrahydrofolate + H(+). The protein operates within one-carbon metabolism; tetrahydrofolate interconversion. Functionally, catalyzes the oxidation of 5,10-methylenetetrahydrofolate to 5,10-methenyltetrahydrofolate and then the hydrolysis of 5,10-methenyltetrahydrofolate to 10-formyltetrahydrofolate. The chain is Bifunctional protein FolD from Fervidobacterium nodosum (strain ATCC 35602 / DSM 5306 / Rt17-B1).